Consider the following 488-residue polypeptide: 3-octaprenyl-4-hydroxybenzoate carboxy-lyase (488 aa).

Position 172 (Asn-172) interacts with Mn(2+). Prenylated FMN is bound by residues 175 to 177 (IYR), 189 to 191 (RWL), and 194 to 195 (RG). A Mn(2+)-binding site is contributed by Glu-238. The active-site Proton donor is Asp-287.

Belongs to the UbiD family. As to quaternary structure, homohexamer. It depends on prenylated FMN as a cofactor. The cofactor is Mn(2+).

It is found in the cell membrane. It catalyses the reaction a 4-hydroxy-3-(all-trans-polyprenyl)benzoate + H(+) = a 2-(all-trans-polyprenyl)phenol + CO2. The protein operates within cofactor biosynthesis; ubiquinone biosynthesis. Functionally, catalyzes the decarboxylation of 3-octaprenyl-4-hydroxy benzoate to 2-octaprenylphenol, an intermediate step in ubiquinone biosynthesis. The sequence is that of 3-octaprenyl-4-hydroxybenzoate carboxy-lyase from Legionella pneumophila (strain Corby).